The following is a 390-amino-acid chain: L-rhamnonate dehydratase (390 aa).

Positions 19 and 45 each coordinate substrate. Mg(2+) is bound by residues D211, E237, and E265. The active-site Proton acceptor is H315. E335 provides a ligand contact to substrate.

This sequence belongs to the mandelate racemase/muconate lactonizing enzyme family. RhamD subfamily. Mg(2+) is required as a cofactor.

It carries out the reaction L-rhamnonate = 2-dehydro-3-deoxy-L-rhamnonate + H2O. Its function is as follows. Catalyzes the dehydration of L-rhamnonate to 2-keto-3-deoxy-L-rhamnonate (KDR). This Saccharopolyspora erythraea (strain ATCC 11635 / DSM 40517 / JCM 4748 / NBRC 13426 / NCIMB 8594 / NRRL 2338) protein is L-rhamnonate dehydratase.